We begin with the raw amino-acid sequence, 488 residues long: Ribulose bisphosphate carboxylase large chain 2 (488 aa).

Residues Asn128 and Thr178 each contribute to the substrate site. The active-site Proton acceptor is Lys180. Residue Lys182 participates in substrate binding. 3 residues coordinate Mg(2+): Lys206, Asp208, and Glu209. Lys206 is modified (N6-carboxylysine). Catalysis depends on His298, which acts as the Proton acceptor. Residues Arg299, His331, and Ser383 each coordinate substrate.

The protein belongs to the RuBisCO large chain family. Type I subfamily. In terms of assembly, heterohexadecamer of 8 large chains and 8 small chains. Requires Mg(2+) as cofactor.

The enzyme catalyses 2 (2R)-3-phosphoglycerate + 2 H(+) = D-ribulose 1,5-bisphosphate + CO2 + H2O. It catalyses the reaction D-ribulose 1,5-bisphosphate + O2 = 2-phosphoglycolate + (2R)-3-phosphoglycerate + 2 H(+). Its function is as follows. RuBisCO catalyzes two reactions: the carboxylation of D-ribulose 1,5-bisphosphate, the primary event in carbon dioxide fixation, as well as the oxidative fragmentation of the pentose substrate. Both reactions occur simultaneously and in competition at the same active site. The protein is Ribulose bisphosphate carboxylase large chain 2 of Nitrobacter hamburgensis (strain DSM 10229 / NCIMB 13809 / X14).